A 275-amino-acid polypeptide reads, in one-letter code: Calcium uniporter protein, mitochondrial (275 aa).

The N-terminal 28 residues, 1-28 (MNSFVIRNGFGLVRTFNTRLFTTSTQNL), are a transit peptide targeting the mitochondrion. At 29 to 165 (EGELKTILGQ…DRKAHRRATA (137 aa)) the chain is on the mitochondrial matrix side. A coiled-coil region spans residues 125–157 (VGLNKLIESKKSEINSLRQKIQPLEEKKQVIDR). Residues 166-186 (IIWTGLGYCFAQAAILARLTW) traverse the membrane as a helical segment. The Mitochondrial intermembrane segment spans residues 187 to 192 (WDLSWD). A Selectivity filter motif is present at residues 191 to 199 (WDIIEPVSY). A helical membrane pass occupies residues 193–213 (IIEPVSYFLTFGSVLIGYTYF). Residue glutamate 195 participates in Ca(2+) binding. Over 214 to 275 (TMTKTEFTYE…ELATKYDHTH (62 aa)) the chain is Mitochondrial matrix. The stretch at 244 to 270 (PKEDYENLVQAIDKKEKELKELELATK) forms a coiled coil.

This sequence belongs to the MCU (TC 1.A.77) family. Homooligomer.

It is found in the mitochondrion inner membrane. It catalyses the reaction Ca(2+)(in) = Ca(2+)(out). Inhibited by ruthenium red or its derivative Ru360. Functionally, mitochondrial inner membrane calcium uniporter that mediates calcium uptake into mitochondria. Constitutes a pore-forming and calcium-conducting subunit. Mitochondrial calcium homeostasis plays key roles in cellular physiology and regulates cell bioenergetics, cytoplasmic calcium signals and activation of cell death pathways. Sufficient to operate as a pore-forming channel without the need of calcium-sensor or auxiliary subunit. This Dictyostelium discoideum (Social amoeba) protein is Calcium uniporter protein, mitochondrial.